Reading from the N-terminus, the 168-residue chain is uncharacterized protein (168 aa).

Disordered stretches follow at residues 1-81 (MSSA…GRSW) and 119-150 (RDLS…STVA). Over residues 7–34 (SRTSRSKATGASSSSISSSIRASPSSSS) the composition is skewed to low complexity. Basic residues predominate over residues 43 to 67 (TRRRRRRTGRRSTKRSIISPRRRRM). Residues 123-146 (ESASTGSENLSRKASNQSQSQGRL) show a composition bias toward polar residues.

This is an uncharacterized protein from Human adenovirus C serotype 2 (HAdV-2).